A 354-amino-acid polypeptide reads, in one-letter code: MATKEEKNKALAAALGQIEKQFGKGSIMKLGDTQALDVEAVSTGSLSLDVALGIGGLPMGRIVEIFGPESSGKTTLTLSVIAQAQKEGKTCAFIDAEHALDPIYAAKLGVNVNELLVSQPDNGEQALEICDALVRSGAVDVIIVDSVAALTPKAEIEGEMGDSHMGLQARLMSQALRKLTGQIKNSNCLVVFINQIRMKIGVMFGNPETTTGGNALKFYASVRLDIRRTGAIKEGEEVIGNETRVKVVKNKVAAPFRQVDFQILYGQGISKTGELIELGVKHKLVDKAGAWYAYNGEKIGQGKANAMKWLEEHPEEALALETKLRNELLANPEKVLAADIAEKNESSTGLEADY.

67–74 (GPESSGKT) provides a ligand contact to ATP.

Belongs to the RecA family.

Its subcellular location is the cytoplasm. In terms of biological role, can catalyze the hydrolysis of ATP in the presence of single-stranded DNA, the ATP-dependent uptake of single-stranded DNA by duplex DNA, and the ATP-dependent hybridization of homologous single-stranded DNAs. It interacts with LexA causing its activation and leading to its autocatalytic cleavage. This is Protein RecA from Pasteurella multocida (strain Pm70).